The sequence spans 176 residues: Putative Ras-related protein RABA4e (176 aa).

The protein belongs to the small GTPase superfamily. Rab family.

The polypeptide is Putative Ras-related protein RABA4e (RABA4E) (Arabidopsis thaliana (Mouse-ear cress)).